The sequence spans 325 residues: Helicase VP6-A (325 aa).

2 disordered regions span residues 1-127 and 174-230; these read MLLA…NGRR and EGVA…EPAR. 4 stretches are compositionally biased toward basic and acidic residues: residues 8–18, 32–54, 61–79, and 92–105; these read VIKRSSEELKQ, EGGKENKTEPKEESKAEGSKDGE, GQKEEGGKETKDADVDRRI, and PGERANENADRGDG. Lysine 106 provides a ligand contact to ATP. Residues 106–122 are compositionally biased toward gly residues; sequence KVGGGGGDADAGVGATG. Residues 175 to 229 show a composition bias toward basic and acidic residues; it reads GVAEQTERSRDLRRKEKNGTHAKAVERGGRKQRKESHGDAQREGVEEEKTSEEPA.

It belongs to the orbivirus VP6 family. In terms of assembly, homohexamer.

Its subcellular location is the virion. The enzyme catalyses ATP + H2O = ADP + phosphate + H(+). ATP dependent RNA helicase essential for RNA packaging and viral transcription. Possesses ss- and dsRNA-binding capacity. The polypeptide is Helicase VP6-A (Segment-9) (Bluetongue virus 13 (isolate USA) (BTV 13)).